Reading from the N-terminus, the 173-residue chain is Crossover junction endodeoxyribonuclease RuvC (173 aa).

Active-site residues include Asp8, Glu67, and Asp139. Mg(2+)-binding residues include Asp8, Glu67, and Asp139.

The protein belongs to the RuvC family. Homodimer which binds Holliday junction (HJ) DNA. The HJ becomes 2-fold symmetrical on binding to RuvC with unstacked arms; it has a different conformation from HJ DNA in complex with RuvA. In the full resolvosome a probable DNA-RuvA(4)-RuvB(12)-RuvC(2) complex forms which resolves the HJ. It depends on Mg(2+) as a cofactor.

Its subcellular location is the cytoplasm. It carries out the reaction Endonucleolytic cleavage at a junction such as a reciprocal single-stranded crossover between two homologous DNA duplexes (Holliday junction).. Its function is as follows. The RuvA-RuvB-RuvC complex processes Holliday junction (HJ) DNA during genetic recombination and DNA repair. Endonuclease that resolves HJ intermediates. Cleaves cruciform DNA by making single-stranded nicks across the HJ at symmetrical positions within the homologous arms, yielding a 5'-phosphate and a 3'-hydroxyl group; requires a central core of homology in the junction. The consensus cleavage sequence is 5'-(A/T)TT(C/G)-3'. Cleavage occurs on the 3'-side of the TT dinucleotide at the point of strand exchange. HJ branch migration catalyzed by RuvA-RuvB allows RuvC to scan DNA until it finds its consensus sequence, where it cleaves and resolves the cruciform DNA. This is Crossover junction endodeoxyribonuclease RuvC from Shewanella frigidimarina (strain NCIMB 400).